A 421-amino-acid chain; its full sequence is 4-hydroxy-3-methylbut-2-en-1-yl diphosphate synthase (flavodoxin) (421 aa).

4 residues coordinate [4Fe-4S] cluster: cysteine 300, cysteine 303, cysteine 346, and glutamate 353.

This sequence belongs to the IspG family. Requires [4Fe-4S] cluster as cofactor.

It carries out the reaction (2E)-4-hydroxy-3-methylbut-2-enyl diphosphate + oxidized [flavodoxin] + H2O + 2 H(+) = 2-C-methyl-D-erythritol 2,4-cyclic diphosphate + reduced [flavodoxin]. The protein operates within isoprenoid biosynthesis; isopentenyl diphosphate biosynthesis via DXP pathway; isopentenyl diphosphate from 1-deoxy-D-xylulose 5-phosphate: step 5/6. In terms of biological role, converts 2C-methyl-D-erythritol 2,4-cyclodiphosphate (ME-2,4cPP) into 1-hydroxy-2-methyl-2-(E)-butenyl 4-diphosphate. The sequence is that of 4-hydroxy-3-methylbut-2-en-1-yl diphosphate synthase (flavodoxin) from Laribacter hongkongensis (strain HLHK9).